The following is a 206-amino-acid chain: Recombination protein RecR (206 aa).

The segment at 60 to 75 (CARCNTFCEGGLCDIC) adopts a C4-type zinc-finger fold. A Toprim domain is found at 83-178 (RRLMVVHMPA…KVSRLSQGIP (96 aa)).

The protein belongs to the RecR family.

May play a role in DNA repair. It seems to be involved in an RecBC-independent recombinational process of DNA repair. It may act with RecF and RecO. This chain is Recombination protein RecR, found in Neisseria gonorrhoeae (strain NCCP11945).